We begin with the raw amino-acid sequence, 350 residues long: tRNA uridine(34) hydroxylase (350 aa).

Positions 146–240 (DDPDAVFIDM…YARKAREQGL (95 aa)) constitute a Rhodanese domain. C200 (cysteine persulfide intermediate) is an active-site residue. Residues 314-350 (PEEEQRRRRAGRENGNKIFNKSRGRLNTQLGIPDPAE) form a disordered region. Positions 316-328 (EEQRRRRAGRENG) are enriched in basic and acidic residues.

Belongs to the TrhO family.

The enzyme catalyses uridine(34) in tRNA + AH2 + O2 = 5-hydroxyuridine(34) in tRNA + A + H2O. Its function is as follows. Catalyzes oxygen-dependent 5-hydroxyuridine (ho5U) modification at position 34 in tRNAs. This is tRNA uridine(34) hydroxylase from Citrobacter koseri (strain ATCC BAA-895 / CDC 4225-83 / SGSC4696).